We begin with the raw amino-acid sequence, 259 residues long: Ribonuclease HII (259 aa).

The region spanning 70–258 is the RNase H type-2 domain; the sequence is TLIVGIDEVG…VKSLVLGKKE (189 aa). A divalent metal cation-binding residues include Asp76, Glu77, and Asp168.

The protein belongs to the RNase HII family. It depends on Mn(2+) as a cofactor. Mg(2+) is required as a cofactor.

It localises to the cytoplasm. The catalysed reaction is Endonucleolytic cleavage to 5'-phosphomonoester.. In terms of biological role, endonuclease that specifically degrades the RNA of RNA-DNA hybrids. This chain is Ribonuclease HII, found in Streptococcus pneumoniae serotype 2 (strain D39 / NCTC 7466).